The chain runs to 140 residues: Protein E6 (140 aa).

2 zinc fingers span residues 28 to 64 and 101 to 137; these read CNFC…CRYC and CHHC…CRQC.

It belongs to the papillomaviridae E6 protein family. As to quaternary structure, forms homodimers. Interacts with ubiquitin-protein ligase UBE3A/E6-AP; this interaction stimulates UBE3A ubiquitin activity. Interacts with host BAK1.

The protein localises to the host cytoplasm. It is found in the host nucleus. Functionally, plays a major role in the induction and maintenance of cellular transformation. E6 associates with host UBE3A/E6-AP ubiquitin-protein ligase and modulates its activity. Protects host keratinocytes from apoptosis by mediating the degradation of host BAK1. May also inhibit host immune response. This chain is Protein E6, found in Human papillomavirus 24.